A 232-amino-acid chain; its full sequence is Cytidylate kinase (232 aa).

ATP is bound at residue 15-23; the sequence is GPAGAGKST. The segment at 164–192 is disordered; the sequence is KEDPPPISQGQLAAEMKERDMRDSTRADA. Over residues 178–189 the composition is skewed to basic and acidic residues; sequence EMKERDMRDSTR.

The protein belongs to the cytidylate kinase family. Type 1 subfamily.

It localises to the cytoplasm. The catalysed reaction is CMP + ATP = CDP + ADP. It catalyses the reaction dCMP + ATP = dCDP + ADP. The polypeptide is Cytidylate kinase (Solibacter usitatus (strain Ellin6076)).